Reading from the N-terminus, the 931-residue chain is Protocadherin gamma-B2 (931 aa).

The first 30 residues, 1–30, serve as a signal peptide directing secretion; that stretch reads MKASSGRCGLVRWLQVLLPFLLSLFPGALP. 6 consecutive Cadherin domains span residues 31–133, 134–242, 243–347, 348–452, 453–562, and 570–675; these read VQIR…TPLF, KQTK…PPVF, SQDV…APEV, IVTS…APVF, QQTS…APRV, and DGSA…LPDL. At 31–691 the chain is on the extracellular side; that stretch reads VQIRYSIPEE…SDPQAKLQFY (661 aa). Residues asparagine 419 and asparagine 545 are each glycosylated (N-linked (GlcNAc...) asparagine). Residues 692-712 form a helical membrane-spanning segment; the sequence is LVVALALISVLFFLAVILAIS. Topologically, residues 713-931 are cytoplasmic; that stretch reads LRLRLSSRSD…KKKSGKKEKK (219 aa). Disordered regions lie at residues 814-840 and 901-931; these read DWRF…WPNN and ATLT…KEKK. Residues 815-840 show a composition bias toward polar residues; it reads WRFSQAQRPGTSGSQNGDDTGTWPNN. Over residues 921 to 931 the composition is skewed to basic residues; that stretch reads NKKKSGKKEKK.

It localises to the cell membrane. Its function is as follows. Potential calcium-dependent cell-adhesion protein. May be involved in the establishment and maintenance of specific neuronal connections in the brain. This Homo sapiens (Human) protein is Protocadherin gamma-B2 (PCDHGB2).